Reading from the N-terminus, the 305-residue chain is DNA-directed RNA polymerase 35 kDa subunit (305 aa).

Belongs to the poxviridae DNA-directed RNA polymerase 35 kDa subunit family. As to quaternary structure, the DNA-dependent RNA polymerase used for intermediate and late genes expression consists of eight subunits 147 kDa, 133 kDa, 35 kDa, 30 kDa, 22 kDa, 19 kDa, 18 kDa and 7 kDa totalling more than 500 kDa in mass. The same holoenzyme, with the addition of the transcription-specificity factor RAP94, is used for early gene expression.

The protein resides in the virion. The catalysed reaction is RNA(n) + a ribonucleoside 5'-triphosphate = RNA(n+1) + diphosphate. Part of the DNA-dependent RNA polymerase which catalyzes the transcription of viral DNA into RNA using the four ribonucleoside triphosphates as substrates. Responsible for the transcription of early, intermediate and late genes. DNA-dependent RNA polymerase associates with the early transcription factor (ETF), itself composed of D6 and A7, thereby allowing the early genes transcription. Late transcription, and probably also intermediate transcription, require newly synthesized RNA polymerase. This Variola virus (isolate Human/India/Ind3/1967) (VARV) protein is DNA-directed RNA polymerase 35 kDa subunit (OPG156).